A 161-amino-acid polypeptide reads, in one-letter code: Interleukin-17F (161 aa).

A signal peptide spans 1-28 (MKGSCETTMVKSLLLLMLGFAIISSGAA). N-linked (GlcNAc...) asparagine glycosylation is present at Asn83. Cystine bridges form between Cys100/Cys150 and Cys105/Cys152.

Belongs to the IL-17 family. Homodimer; disulfide-linked. Heterodimer with IL17A (IL17A-IL17F). Forms complexes with IL17RA and IL17RC receptors with 2:1 binding stoichiometry: two receptor chains for one interleukin molecule. IL17F homodimer forms predominantly complexes with IL17RC homodimer, whereas IL17A-IL17F favors complexes with IL17RA-IL17RC. IL17RA and IL17RC chains cannot distinguish between IL17A and IL17F molecules, potentially enabling the formation of topologically distinct complexes.

It is found in the secreted. Effector cytokine of innate and adaptive immune system involved in antimicrobial host defense and maintenance of tissue integrity. IL17A-IL17F signals via IL17RA-IL17RC heterodimeric receptor complex, triggering homotypic interaction of IL17RA and IL17RC chains with TRAF3IP2 adapter through SEFIR domains. This leads to downstream TRAF6-mediated activation of NF-kappa-B and MAPkinase pathways ultimately resulting in transcriptional activation of cytokines, chemokines, antimicrobial peptides and matrix metalloproteinases, with potential strong immune inflammation. IL17A-IL17F is primarily involved in host defense against extracellular bacteria and fungi by inducing neutrophilic inflammation. As signature effector cytokine of T-helper 17 cells (Th17), primarily induces neutrophil activation and recruitment at infection and inflammatory sites. Stimulates the production of antimicrobial beta-defensins DEFB1, DEFB103A, and DEFB104A by mucosal epithelial cells, limiting the entry of microbes through the epithelial barriers. IL17F homodimer can signal via IL17RC homodimeric receptor complex, triggering downstream activation of TRAF6 and NF-kappa-B signaling pathway. Via IL17RC induces transcriptional activation of IL33, a potent cytokine that stimulates group 2 innate lymphoid cells and adaptive T-helper 2 cells involved in pulmonary allergic response to fungi. Likely via IL17RC, promotes sympathetic innervation of peripheral organs by coordinating the communication between gamma-delta T cells and parenchymal cells. Stimulates sympathetic innervation of thermogenic adipose tissue by driving TGFB1 expression. Regulates the composition of intestinal microbiota and immune tolerance by inducing antimicrobial proteins that specifically control the growth of commensal Firmicutes and Bacteroidetes. This is Interleukin-17F (Il17f) from Rattus norvegicus (Rat).